We begin with the raw amino-acid sequence, 55 residues long: Large ribosomal subunit protein bL33 (55 aa).

It belongs to the bacterial ribosomal protein bL33 family.

The protein is Large ribosomal subunit protein bL33 of Micrococcus luteus (strain ATCC 4698 / DSM 20030 / JCM 1464 / CCM 169 / CCUG 5858 / IAM 1056 / NBRC 3333 / NCIMB 9278 / NCTC 2665 / VKM Ac-2230) (Micrococcus lysodeikticus).